Consider the following 474-residue polypeptide: Glutamate--tRNA ligase (474 aa).

A 'HIGH' region motif is present at residues 9–19 (PSPTGYLHVGG). The 'KMSKS' region signature appears at 240 to 244 (KLSKR). ATP is bound at residue Lys243.

Belongs to the class-I aminoacyl-tRNA synthetase family. Glutamate--tRNA ligase type 1 subfamily. As to quaternary structure, monomer.

The protein localises to the cytoplasm. The catalysed reaction is tRNA(Glu) + L-glutamate + ATP = L-glutamyl-tRNA(Glu) + AMP + diphosphate. Its function is as follows. Catalyzes the attachment of glutamate to tRNA(Glu) in a two-step reaction: glutamate is first activated by ATP to form Glu-AMP and then transferred to the acceptor end of tRNA(Glu). This is Glutamate--tRNA ligase from Aliivibrio salmonicida (strain LFI1238) (Vibrio salmonicida (strain LFI1238)).